We begin with the raw amino-acid sequence, 353 residues long: sn-glycerol-3-phosphate import ATP-binding protein UgpC (353 aa).

The region spanning 4–234 (ILLNDVRKSY…PASEFVAGFI (231 aa)) is the ABC transporter domain. 36–43 (GPSGCGKS) is a binding site for ATP.

The protein belongs to the ABC transporter superfamily. sn-glycerol-3-phosphate importer (TC 3.A.1.1.3) family. As to quaternary structure, the complex is composed of two ATP-binding proteins (UgpC), two transmembrane proteins (UgpA and UgpE) and a solute-binding protein (UgpB).

It is found in the cell inner membrane. It carries out the reaction sn-glycerol 3-phosphate(out) + ATP + H2O = sn-glycerol 3-phosphate(in) + ADP + phosphate + H(+). In terms of biological role, part of the ABC transporter complex UgpBAEC involved in sn-glycerol-3-phosphate (G3P) import. Responsible for energy coupling to the transport system. The sequence is that of sn-glycerol-3-phosphate import ATP-binding protein UgpC from Paracoccus denitrificans (strain Pd 1222).